A 458-amino-acid polypeptide reads, in one-letter code: Argininosuccinate lyase (458 aa).

It belongs to the lyase 1 family. Argininosuccinate lyase subfamily.

The protein localises to the cytoplasm. It catalyses the reaction 2-(N(omega)-L-arginino)succinate = fumarate + L-arginine. It functions in the pathway amino-acid biosynthesis; L-arginine biosynthesis; L-arginine from L-ornithine and carbamoyl phosphate: step 3/3. In Citrifermentans bemidjiense (strain ATCC BAA-1014 / DSM 16622 / JCM 12645 / Bem) (Geobacter bemidjiensis), this protein is Argininosuccinate lyase.